The following is a 523-amino-acid chain: tRNA-2-methylthio-N(6)-dimethylallyladenosine synthase (523 aa).

The interval 1-26 (MNEKQRLEQTGQIQTASHPADRKSDL) is disordered. The span at 8 to 17 (EQTGQIQTAS) shows a compositional bias: polar residues. The 119-residue stretch at 80–198 (RKFYIRTYGC…LPYILHEAYM (119 aa)) folds into the MTTase N-terminal domain. Residues cysteine 89, cysteine 125, cysteine 159, cysteine 235, cysteine 239, and cysteine 242 each coordinate [4Fe-4S] cluster. One can recognise a Radical SAM core domain in the interval 221-451 (RKGNIKAWVN…NALVQEIAAK (231 aa)). One can recognise a TRAM domain in the interval 454–517 (KQYEGQVVEV…TWTLTGELAN (64 aa)).

Belongs to the methylthiotransferase family. MiaB subfamily. Monomer. The cofactor is [4Fe-4S] cluster.

The protein localises to the cytoplasm. The catalysed reaction is N(6)-dimethylallyladenosine(37) in tRNA + (sulfur carrier)-SH + AH2 + 2 S-adenosyl-L-methionine = 2-methylsulfanyl-N(6)-dimethylallyladenosine(37) in tRNA + (sulfur carrier)-H + 5'-deoxyadenosine + L-methionine + A + S-adenosyl-L-homocysteine + 2 H(+). Functionally, catalyzes the methylthiolation of N6-(dimethylallyl)adenosine (i(6)A), leading to the formation of 2-methylthio-N6-(dimethylallyl)adenosine (ms(2)i(6)A) at position 37 in tRNAs that read codons beginning with uridine. The chain is tRNA-2-methylthio-N(6)-dimethylallyladenosine synthase from Geobacillus thermodenitrificans (strain NG80-2).